A 164-amino-acid polypeptide reads, in one-letter code: Transcription elongation factor GreA (164 aa).

The stretch at 50–76 forms a coiled coil; that stretch reads YHAAREEQGQQEARIRQLQELLNNAKV.

This sequence belongs to the GreA/GreB family.

Functionally, necessary for efficient RNA polymerase transcription elongation past template-encoded arresting sites. The arresting sites in DNA have the property of trapping a certain fraction of elongating RNA polymerases that pass through, resulting in locked ternary complexes. Cleavage of the nascent transcript by cleavage factors such as GreA or GreB allows the resumption of elongation from the new 3'terminus. GreA releases sequences of 2 to 3 nucleotides. In Mycolicibacterium smegmatis (strain ATCC 700084 / mc(2)155) (Mycobacterium smegmatis), this protein is Transcription elongation factor GreA.